The primary structure comprises 738 residues: Outer membrane protein assembly factor BamA (738 aa).

A signal peptide spans Met-1 to Ala-13. POTRA domains are found at residues Asp-14–Asn-81, Pro-82–Ala-159, Thr-162–Gly-248, Tyr-251–Thr-329, and Tyr-332–Arg-404.

The protein belongs to the BamA family. As to quaternary structure, part of the Bam complex.

The protein localises to the cell outer membrane. Part of the outer membrane protein assembly complex, which is involved in assembly and insertion of beta-barrel proteins into the outer membrane. This is Outer membrane protein assembly factor BamA from Neorickettsia risticii (strain Illinois).